The primary structure comprises 211 residues: Outer-membrane lipoprotein carrier protein (211 aa).

Residues M1 to A24 form the signal peptide.

It belongs to the LolA family. Monomer.

Its subcellular location is the periplasm. Participates in the translocation of lipoproteins from the inner membrane to the outer membrane. Only forms a complex with a lipoprotein if the residue after the N-terminal Cys is not an aspartate (The Asp acts as a targeting signal to indicate that the lipoprotein should stay in the inner membrane). In Coxiella burnetii (strain CbuK_Q154) (Coxiella burnetii (strain Q154)), this protein is Outer-membrane lipoprotein carrier protein.